The primary structure comprises 768 residues: Actin filament-associated protein 1-like 1 (768 aa).

The disordered stretch occupies residues 83-145 (LRDMSDDGEP…GKSPEYISSH (63 aa)). A phosphoserine mark is found at Ser-87, Ser-93, Ser-97, Ser-103, and Ser-153. Residues 165–185 (SYPTTRMNGELKNSYNDSDAM) show a composition bias toward polar residues. The interval 165–211 (SYPTTRMNGELKNSYNDSDAMSSSYESYDEEEEEEKGRQPKHQWPSE) is disordered. Residues 220 to 316 (DCRICAFLLR…WLKVIREVSR (97 aa)) enclose the PH 1 domain. Phosphoserine is present on residues Ser-329 and Ser-343. The span at 340 to 349 (KRLSQEKQNS) shows a compositional bias: basic and acidic residues. Positions 340–382 (KRLSQEKQNSDSDSLGMNDSGSTLGRREACEHGKGKKNSLAEL) are disordered. The segment covering 350–362 (DSDSLGMNDSGST) has biased composition (polar residues). Positions 418 to 512 (EVPCCGYLNV…WLGLLLVEMG (95 aa)) constitute a PH 2 domain. Position 557 is a phosphotyrosine (Tyr-557). The disordered stretch occupies residues 564 to 609 (KVQDEEPQRPTGAQVKRHASSCSEKSHRADPQVKVKRHASSANQYK). Positions 587–596 (EKSHRADPQV) are enriched in basic and acidic residues. Residues 611-701 (GKNRAEEDAR…AVKERLQQSL (91 aa)) adopt a coiled-coil conformation. A disordered region spans residues 705-768 (PALGLSVSNK…KAKEWEMKKT (64 aa)). Residues 710-734 (SVSNKNKSQDTTNKPQSNAPEQSLP) show a composition bias toward polar residues. At Ser-747 the chain carries Phosphoserine. Residues 759-768 (KAKEWEMKKT) are compositionally biased toward basic and acidic residues.

Interacts with CTTN.

It is found in the cytoplasm. It localises to the cell projection. The protein resides in the podosome. The protein localises to the invadopodium. Its subcellular location is the cytoskeleton. It is found in the stress fiber. Its function is as follows. May be involved in podosome and invadosome formation. The polypeptide is Actin filament-associated protein 1-like 1 (Afap1l1) (Mus musculus (Mouse)).